A 255-amino-acid chain; its full sequence is Ornithine decarboxylase antizyme (255 aa).

This sequence belongs to the ODC antizyme family. Interacts with ODC and thereby sterically blocks ODC homodimerization.

Ornithine decarboxylase (ODC) antizyme protein that negatively regulates ODC activity and intracellular polyamine biosynthesis in response to increased intracellular polyamine levels. Binds to ODC monomers, inhibiting the assembly of the functional ODC homodimer, and targets the monomers for ubiquitin-independent proteolytic destruction by the 26S proteasome. The sequence is that of Ornithine decarboxylase antizyme (OAZ1) from Eremothecium gossypii (strain ATCC 10895 / CBS 109.51 / FGSC 9923 / NRRL Y-1056) (Yeast).